A 443-amino-acid polypeptide reads, in one-letter code: Glutamyl-tRNA reductase (443 aa).

Substrate contacts are provided by residues 49-52, Ser-109, 114-116, and Gln-120; these read TCNR and ETQ. Catalysis depends on Cys-50, which acts as the Nucleophile. 189-194 contributes to the NADP(+) binding site; the sequence is GAGEMS.

This sequence belongs to the glutamyl-tRNA reductase family. In terms of assembly, homodimer.

The catalysed reaction is (S)-4-amino-5-oxopentanoate + tRNA(Glu) + NADP(+) = L-glutamyl-tRNA(Glu) + NADPH + H(+). Its pathway is porphyrin-containing compound metabolism; protoporphyrin-IX biosynthesis; 5-aminolevulinate from L-glutamyl-tRNA(Glu): step 1/2. In terms of biological role, catalyzes the NADPH-dependent reduction of glutamyl-tRNA(Glu) to glutamate 1-semialdehyde (GSA). In Desulfitobacterium hafniense (strain DSM 10664 / DCB-2), this protein is Glutamyl-tRNA reductase.